The following is a 336-amino-acid chain: Cell division protein ZipA (336 aa).

Residues 1-2 (ME) lie on the Periplasmic side of the membrane. A helical membrane pass occupies residues 3–23 (LHILFFILAGLLIAVLIGFSL). Over 24–336 (WSARREKSRI…SRQSYLARVS (313 aa)) the chain is Cytoplasmic. Residues 57–76 (SLNPQSYAQTTGQHGETEAD) are disordered. Positions 59–70 (NPQSYAQTTGQH) are enriched in polar residues.

Belongs to the ZipA family. As to quaternary structure, interacts with FtsZ via their C-terminal domains.

It is found in the cell inner membrane. In terms of biological role, essential cell division protein that stabilizes the FtsZ protofilaments by cross-linking them and that serves as a cytoplasmic membrane anchor for the Z ring. Also required for the recruitment to the septal ring of downstream cell division proteins. This Actinobacillus pleuropneumoniae serotype 7 (strain AP76) protein is Cell division protein ZipA.